A 254-amino-acid polypeptide reads, in one-letter code: MERKSYVFGNWKMHKTAEEAKDFLSVFCPFVKEISPASIVGIAPSFTTLSACCESIKKMDSSIWLGAQNVHQDSSGAFTGEVSLPMLQEFHVNFVLLGHSECRHIFHEEDSTIALKVGAAARSGVVPVLCIGETLETRESGTTKDVLSNQLILGLAQLPETASVIIAYEPVWAIGTGKVASTADVQEVHAFCREVLSRIFSKEKSETISILYGGSVKADNAEGFARCPDVDGLLVGGASLDPQVFANVVGNFNL.

10–12 provides a ligand contact to substrate; sequence NWK. His-99 (electrophile) is an active-site residue. The active-site Proton acceptor is the Glu-169. Substrate is bound by residues Gly-175, Ser-215, and 236–237; that span reads GG.

It belongs to the triosephosphate isomerase family. Homodimer.

Its subcellular location is the cytoplasm. It catalyses the reaction D-glyceraldehyde 3-phosphate = dihydroxyacetone phosphate. The protein operates within carbohydrate biosynthesis; gluconeogenesis. It participates in carbohydrate degradation; glycolysis; D-glyceraldehyde 3-phosphate from glycerone phosphate: step 1/1. Involved in the gluconeogenesis. Catalyzes stereospecifically the conversion of dihydroxyacetone phosphate (DHAP) to D-glyceraldehyde-3-phosphate (G3P). This Chlamydia felis (strain Fe/C-56) (Chlamydophila felis) protein is Triosephosphate isomerase.